The sequence spans 44 residues: Defensin ARD1 (44 aa).

Disulfide bonds link Cys7–Cys32, Cys18–Cys40, and Cys22–Cys42.

It localises to the secreted. Functionally, possesses potent anti-fungal activity. The sequence is that of Defensin ARD1 from Archaeoprepona demophon (One-spotted leafwing butterfly).